A 216-amino-acid chain; its full sequence is Putative germin-like protein 2-1 (216 aa).

Positions 1–21 (MASTWFFLLALLAVSISNAFA) are cleaved as a signal peptide. Cysteine 31 and cysteine 46 are oxidised to a cystine. The Cupin type-1 domain occupies 60–210 (SGLHMAGNTS…AFQVEKKIVD (151 aa)). Residue asparagine 67 is glycosylated (N-linked (GlcNAc...) asparagine). Mn(2+)-binding residues include histidine 108, histidine 110, glutamate 115, and histidine 156.

It belongs to the germin family. In terms of assembly, oligomer (believed to be a pentamer but probably hexamer).

The protein localises to the secreted. Its subcellular location is the extracellular space. It localises to the apoplast. Its function is as follows. May play a role in plant defense. Probably has no oxalate oxidase activity even if the active site is conserved. The protein is Putative germin-like protein 2-1 of Oryza sativa subsp. japonica (Rice).